Consider the following 346-residue polypeptide: Isopentenyl-diphosphate delta-isomerase (346 aa).

9–10 (RK) lines the substrate pocket. FMN is bound by residues serine 67, 68 to 70 (SMT), serine 98, and asparagine 127. Residue 98–100 (SQR) participates in substrate binding. Substrate is bound at residue glutamine 162. Glutamate 163 provides a ligand contact to Mg(2+). FMN is bound by residues lysine 194, threonine 224, 274–276 (GIR), and 295–296 (AA).

The protein belongs to the IPP isomerase type 2 family. In terms of assembly, homooctamer. Dimer of tetramers. FMN serves as cofactor. It depends on NADPH as a cofactor. The cofactor is Mg(2+).

The protein resides in the cytoplasm. It catalyses the reaction isopentenyl diphosphate = dimethylallyl diphosphate. Functionally, involved in the biosynthesis of isoprenoids. Catalyzes the 1,3-allylic rearrangement of the homoallylic substrate isopentenyl (IPP) to its allylic isomer, dimethylallyl diphosphate (DMAPP). This is Isopentenyl-diphosphate delta-isomerase from Stutzerimonas stutzeri (strain A1501) (Pseudomonas stutzeri).